The sequence spans 247 residues: Acetoacetate decarboxylase 1 (247 aa).

The active-site Schiff-base intermediate with acetoacetate is the lysine 116.

The protein belongs to the ADC family.

The catalysed reaction is acetoacetate + H(+) = acetone + CO2. In terms of biological role, catalyzes the conversion of acetoacetate to acetone and carbon dioxide. This chain is Acetoacetate decarboxylase 1, found in Mesorhizobium japonicum (strain LMG 29417 / CECT 9101 / MAFF 303099) (Mesorhizobium loti (strain MAFF 303099)).